The chain runs to 1077 residues: Carbamoyl phosphate synthase large chain (1077 aa).

Positions 2–403 (PKRTDIKSIL…SLQKALRGLE (402 aa)) are carboxyphosphate synthetic domain. ATP-binding residues include R129, R169, G175, G176, E208, L210, E215, G241, I242, H243, Q285, and E299. Residues 133-328 (DIAMKKIGLD…IAKIAAKLAV (196 aa)) enclose the ATP-grasp 1 domain. The Mg(2+) site is built by Q285, E299, and N301. Mn(2+)-binding residues include Q285, E299, and N301. The segment at 404–553 (VGATGFDPKV…YSTYEEECES (150 aa)) is oligomerization domain. A carbamoyl phosphate synthetic domain region spans residues 554–936 (NPTSDRPKVM…AFSKAMLGSQ (383 aa)). The ATP-grasp 2 domain occupies 679-870 (QQAVNRLGLK…LAKIAARVMV (192 aa)). 10 residues coordinate ATP: R715, R754, L756, E761, G786, V787, H788, S789, Q829, and E841. Mg(2+) is bound by residues Q829, E841, and N843. Residues Q829, E841, and N843 each contribute to the Mn(2+) site. An MGS-like domain is found at 937 to 1077 (SGMKKSGRAL…MHAKIKNMKA (141 aa)). Positions 937-1077 (SGMKKSGRAL…MHAKIKNMKA (141 aa)) are allosteric domain.

This sequence belongs to the CarB family. In terms of assembly, composed of two chains; the small (or glutamine) chain promotes the hydrolysis of glutamine to ammonia, which is used by the large (or ammonia) chain to synthesize carbamoyl phosphate. Tetramer of heterodimers (alpha,beta)4. Mg(2+) is required as a cofactor. Requires Mn(2+) as cofactor.

The enzyme catalyses hydrogencarbonate + L-glutamine + 2 ATP + H2O = carbamoyl phosphate + L-glutamate + 2 ADP + phosphate + 2 H(+). It carries out the reaction hydrogencarbonate + NH4(+) + 2 ATP = carbamoyl phosphate + 2 ADP + phosphate + 2 H(+). It functions in the pathway amino-acid biosynthesis; L-arginine biosynthesis; carbamoyl phosphate from bicarbonate: step 1/1. It participates in pyrimidine metabolism; UMP biosynthesis via de novo pathway; (S)-dihydroorotate from bicarbonate: step 1/3. Functionally, large subunit of the glutamine-dependent carbamoyl phosphate synthetase (CPSase). CPSase catalyzes the formation of carbamoyl phosphate from the ammonia moiety of glutamine, carbonate, and phosphate donated by ATP, constituting the first step of 2 biosynthetic pathways, one leading to arginine and/or urea and the other to pyrimidine nucleotides. The large subunit (synthetase) binds the substrates ammonia (free or transferred from glutamine from the small subunit), hydrogencarbonate and ATP and carries out an ATP-coupled ligase reaction, activating hydrogencarbonate by forming carboxy phosphate which reacts with ammonia to form carbamoyl phosphate. This chain is Carbamoyl phosphate synthase large chain, found in Yersinia pestis.